Here is a 226-residue protein sequence, read N- to C-terminus: Large ribosomal subunit protein uL1 (226 aa).

It belongs to the universal ribosomal protein uL1 family. In terms of assembly, part of the 50S ribosomal subunit.

Its function is as follows. Binds directly to 23S rRNA. The L1 stalk is quite mobile in the ribosome, and is involved in E site tRNA release. Protein L1 is also a translational repressor protein, it controls the translation of the L11 operon by binding to its mRNA. The protein is Large ribosomal subunit protein uL1 of Borreliella afzelii (strain PKo) (Borrelia afzelii).